Reading from the N-terminus, the 218-residue chain is Riboflavin kinase (218 aa).

A signal peptide spans Met1–Leu19. Residues Thr72 and Asn74 each coordinate Mg(2+). The Nucleophile role is filled by Glu155.

It belongs to the flavokinase family. It depends on Zn(2+) as a cofactor. Mg(2+) is required as a cofactor.

Its subcellular location is the microsome. The protein localises to the mitochondrion inner membrane. The protein resides in the endoplasmic reticulum. The catalysed reaction is riboflavin + ATP = FMN + ADP + H(+). It participates in cofactor biosynthesis; FMN biosynthesis; FMN from riboflavin (ATP route): step 1/1. In terms of biological role, catalyzes the phosphorylation of riboflavin (vitamin B2) to form flavin mononucleotide (FMN) coenzyme. The protein is Riboflavin kinase (FMN1) of Saccharomyces cerevisiae (strain ATCC 204508 / S288c) (Baker's yeast).